The primary structure comprises 401 residues: MTSSRFGRLAPGVRDVLPAEAHLMRGLKEKFTKLVETWGYKEVVTPTFEYMENLASEELQEEKFFKFLDRQGHLMALRPDMTRPMARLVATRMKGITPPLRLFYLANVFNYEQPQVGRQREFYQAGVELMGPSSPEADAEVVAMVAEYLMQTGLADFQISIGNVGIFHGLVKQLGLPKEVAQELKEALGNKDFVKVEEILGSHAATPEEARRTLDLIELRGGPEILDRAFGLAQPGPAADAIDNLRQLYWGLTCYGVERHITLDLGLLRGLDYYTGLVFEGYTVAMGFPICGGGRYNQLLAKFGLPMPATGFAVNLERVLVALERLQGPPREPVPDVLVAWEDNSLANALQCVKELRYQGLKVVTAMFEYPPAKAKAEARSLGASRVIYFDKEGKSEELSL.

Belongs to the class-II aminoacyl-tRNA synthetase family. HisZ subfamily. Heteromultimer composed of HisG and HisZ subunits.

The protein localises to the cytoplasm. Its pathway is amino-acid biosynthesis; L-histidine biosynthesis; L-histidine from 5-phospho-alpha-D-ribose 1-diphosphate: step 1/9. Its function is as follows. Required for the first step of histidine biosynthesis. May allow the feedback regulation of ATP phosphoribosyltransferase activity by histidine. The chain is ATP phosphoribosyltransferase regulatory subunit from Desulforamulus reducens (strain ATCC BAA-1160 / DSM 100696 / MI-1) (Desulfotomaculum reducens).